Consider the following 123-residue polypeptide: MIVGIGIDIVYIPRILNLWKKFGNKFLKKVFSQEEIKDSNKYTSCEGKARHFAKRFAAKEAYVKALGTGFGKSIKMSDITTYNTLYGKPQITVKKSNIDYKAELSLSDDTDYAIAFIILHKES.

Positions 8 and 60 each coordinate Mg(2+).

The protein belongs to the P-Pant transferase superfamily. AcpS family. The cofactor is Mg(2+).

The protein localises to the cytoplasm. It catalyses the reaction apo-[ACP] + CoA = holo-[ACP] + adenosine 3',5'-bisphosphate + H(+). Transfers the 4'-phosphopantetheine moiety from coenzyme A to a Ser of acyl-carrier-protein. The protein is Holo-[acyl-carrier-protein] synthase of Ehrlichia ruminantium (strain Welgevonden).